The chain runs to 62 residues: Conotoxin TeAr151 (62 aa).

The first 22 residues, Met1–Ala22, serve as a signal peptide directing secretion. Residues Gln23–Arg47 constitute a propeptide that is removed on maturation. Met55 is subject to Methionine sulfoxide; partial. At Ser60 the chain carries Serine amide.

Belongs to the conotoxin T superfamily. Contains 2 disulfide bonds. In terms of processing, contains 2 disulfide bonds that can be either 'C1-C3, C2-C4' or 'C1-C4, C2-C3', since these disulfide connectivities have been observed for conotoxins with cysteine framework V (for examples, see AC P0DQQ7 and AC P81755).. Expressed by the venom duct. Is mostly present in part 5 of the venom duct (distal part near the pharynx), and less abundantly present in part 4 of the venom duct.

It localises to the secreted. The protein is Conotoxin TeAr151 of Conus textile (Cloth-of-gold cone).